The following is a 498-amino-acid chain: ATP synthase subunit beta, chloroplastic (498 aa).

172–179 (GGAGVGKT) contributes to the ATP binding site.

This sequence belongs to the ATPase alpha/beta chains family. In terms of assembly, F-type ATPases have 2 components, CF(1) - the catalytic core - and CF(0) - the membrane proton channel. CF(1) has five subunits: alpha(3), beta(3), gamma(1), delta(1), epsilon(1). CF(0) has four main subunits: a(1), b(1), b'(1) and c(9-12).

It is found in the plastid. Its subcellular location is the chloroplast thylakoid membrane. The catalysed reaction is ATP + H2O + 4 H(+)(in) = ADP + phosphate + 5 H(+)(out). Its function is as follows. Produces ATP from ADP in the presence of a proton gradient across the membrane. The catalytic sites are hosted primarily by the beta subunits. In Phaseolus vulgaris (Kidney bean), this protein is ATP synthase subunit beta, chloroplastic.